Reading from the N-terminus, the 96-residue chain is Seed trypsin/chymotrypsin inhibitor IVA (96 aa).

Residues 1–10 form the signal peptide; sequence LSFAANVVNA. A propeptide spanning residues 11–24 is cleaved from the precursor; that stretch reads RFDSTSFITQVLSN. 7 disulfide bridges follow: cysteine 32-cysteine 85, cysteine 33-cysteine 48, cysteine 36-cysteine 81, cysteine 38-cysteine 46, cysteine 55-cysteine 62, cysteine 59-cysteine 74, and cysteine 64-cysteine 72. The propeptide at 88–96 is removed in PSTI I; that stretch reads SEVEEVIKN.

The protein belongs to the Bowman-Birk serine protease inhibitor family. Seed.

Inhibitor of trypsin and of chymotrypsin. May function as a natural phytochemical defense against predators. This chain is Seed trypsin/chymotrypsin inhibitor IVA (TI1236), found in Pisum sativum (Garden pea).